Here is a 377-residue protein sequence, read N- to C-terminus: MRAIAPRSIRGEFRGRLGGFALDAAFSVPATGITGLFGPSGCGKSTVLRCLAGLQRLPGGRCDVDGDVWQDEATFLKPHQRPIGYVFQEASLFQHLSVRANLLYGAPRGGADAAEGAVGFDEVIELLGLSHLLDRAPRNLSGGERQRVAIGRALLSQPKLLLMDEPLSALDRLTKDEILPFLERLHARLSLPVIYVSHDITEIERLADHLILMRAGKVLAAGPLTELQSDPALPLATARDAAVNVDAIAESYDSVYGLLTLRLDGGRLLVPSAPVQPGEARRIRIAAGDVSLAREAPHRTSILNILPARIATTSPVGPNEVLVVLALGPGGQGARLLARVTRRSWDQLQLAAGDELFAQIKGVALAPERGAARDSAS.

Residues 4-240 (IAPRSIRGEF…PALPLATARD (237 aa)) form the ABC transporter domain. 38–45 (GPSGCGKS) lines the ATP pocket. Residues 299-369 (RTSILNILPA…IKGVALAPER (71 aa)) form the Mop domain.

It belongs to the ABC transporter superfamily. Molybdate importer (TC 3.A.1.8) family. The complex is composed of two ATP-binding proteins (ModC), two transmembrane proteins (ModB) and a solute-binding protein (ModA).

It localises to the cell inner membrane. It catalyses the reaction molybdate(out) + ATP + H2O = molybdate(in) + ADP + phosphate + H(+). Functionally, part of the ABC transporter complex ModABC involved in molybdenum import. Responsible for energy coupling to the transport system. This Rhodopseudomonas palustris (strain HaA2) protein is Molybdenum import ATP-binding protein ModC.